Reading from the N-terminus, the 282-residue chain is Bifunctional protein FolD (282 aa).

NADP(+) contacts are provided by residues 166–168 and Ser191; that span reads GRS.

Belongs to the tetrahydrofolate dehydrogenase/cyclohydrolase family. In terms of assembly, homodimer.

It catalyses the reaction (6R)-5,10-methylene-5,6,7,8-tetrahydrofolate + NADP(+) = (6R)-5,10-methenyltetrahydrofolate + NADPH. The enzyme catalyses (6R)-5,10-methenyltetrahydrofolate + H2O = (6R)-10-formyltetrahydrofolate + H(+). It functions in the pathway one-carbon metabolism; tetrahydrofolate interconversion. In terms of biological role, catalyzes the oxidation of 5,10-methylenetetrahydrofolate to 5,10-methenyltetrahydrofolate and then the hydrolysis of 5,10-methenyltetrahydrofolate to 10-formyltetrahydrofolate. This Acidovorax ebreus (strain TPSY) (Diaphorobacter sp. (strain TPSY)) protein is Bifunctional protein FolD.